The sequence spans 186 residues: Protein Syd (186 aa).

Belongs to the Syd family.

The protein localises to the cell inner membrane. Functionally, interacts with the SecY protein in vivo. May bind preferentially to an uncomplexed state of SecY, thus functioning either as a chelating agent for excess SecY in the cell or as a regulatory factor that negatively controls the translocase function. This is Protein Syd from Erwinia tasmaniensis (strain DSM 17950 / CFBP 7177 / CIP 109463 / NCPPB 4357 / Et1/99).